Consider the following 492-residue polypeptide: Glycerol kinase (492 aa).

An ADP-binding site is contributed by Thr11. ATP is bound by residues Thr11 and Thr12. Thr11 lines the sn-glycerol 3-phosphate pocket. Lys15 lines the ADP pocket. Sn-glycerol 3-phosphate-binding residues include Arg79, Glu80, Tyr129, and Asp238. 5 residues coordinate glycerol: Arg79, Glu80, Tyr129, Asp238, and Gln239. Positions 260, 302, 403, and 407 each coordinate ADP. Positions 260, 302, and 403 each coordinate ATP.

Belongs to the FGGY kinase family.

The enzyme catalyses glycerol + ATP = sn-glycerol 3-phosphate + ADP + H(+). It participates in polyol metabolism; glycerol degradation via glycerol kinase pathway; sn-glycerol 3-phosphate from glycerol: step 1/1. Inhibited by fructose 1,6-bisphosphate (FBP). Key enzyme in the regulation of glycerol uptake and metabolism. Catalyzes the phosphorylation of glycerol to yield sn-glycerol 3-phosphate. The sequence is that of Glycerol kinase from Aquifex aeolicus (strain VF5).